A 251-amino-acid chain; its full sequence is 2,3-bisphosphoglycerate-dependent phosphoglycerate mutase (251 aa).

Substrate-binding positions include 11–18 (RHGNSDWN), 24–25 (TG), arginine 63, 90–93 (ERHY), lysine 101, 117–118 (RR), and 185–186 (GN). Histidine 12 serves as the catalytic Tele-phosphohistidine intermediate. Residue glutamate 90 is the Proton donor/acceptor of the active site.

This sequence belongs to the phosphoglycerate mutase family. BPG-dependent PGAM subfamily.

It catalyses the reaction (2R)-2-phosphoglycerate = (2R)-3-phosphoglycerate. It participates in carbohydrate degradation; glycolysis; pyruvate from D-glyceraldehyde 3-phosphate: step 3/5. Functionally, catalyzes the interconversion of 2-phosphoglycerate and 3-phosphoglycerate. The sequence is that of 2,3-bisphosphoglycerate-dependent phosphoglycerate mutase from Clavibacter sepedonicus (Clavibacter michiganensis subsp. sepedonicus).